The sequence spans 474 residues: 6-phospho-beta-galactosidase (474 aa).

D-galactose 6-phosphate is bound by residues Q18, H115, N159, E160, and N296. The active-site Proton donor is E160. E374 (nucleophile) is an active-site residue. 4 residues coordinate D-galactose 6-phosphate: S427, W428, K434, and Y436.

The protein belongs to the glycosyl hydrolase 1 family.

It carries out the reaction a 6-phospho-beta-D-galactoside + H2O = D-galactose 6-phosphate + an alcohol. It participates in carbohydrate metabolism; lactose degradation; D-galactose 6-phosphate and beta-D-glucose from lactose 6-phosphate: step 1/1. This is 6-phospho-beta-galactosidase from Clostridium acetobutylicum (strain ATCC 824 / DSM 792 / JCM 1419 / IAM 19013 / LMG 5710 / NBRC 13948 / NRRL B-527 / VKM B-1787 / 2291 / W).